Here is a 502-residue protein sequence, read N- to C-terminus: ATP synthase subunit alpha (502 aa).

ATP is bound at residue Gly169 to Thr176.

It belongs to the ATPase alpha/beta chains family. F-type ATPases have 2 components, CF(1) - the catalytic core - and CF(0) - the membrane proton channel. CF(1) has five subunits: alpha(3), beta(3), gamma(1), delta(1), epsilon(1). CF(0) has three main subunits: a(1), b(2) and c(9-12). The alpha and beta chains form an alternating ring which encloses part of the gamma chain. CF(1) is attached to CF(0) by a central stalk formed by the gamma and epsilon chains, while a peripheral stalk is formed by the delta and b chains.

Its subcellular location is the cell membrane. It carries out the reaction ATP + H2O + 4 H(+)(in) = ADP + phosphate + 5 H(+)(out). Produces ATP from ADP in the presence of a proton gradient across the membrane. The alpha chain is a regulatory subunit. The protein is ATP synthase subunit alpha of Bacillus pumilus (strain SAFR-032).